The sequence spans 408 residues: LL-diaminopimelate aminotransferase (408 aa).

Residues tyrosine 15 and glycine 42 each coordinate substrate. Pyridoxal 5'-phosphate contacts are provided by residues tyrosine 72, 108–109 (SK), tyrosine 132, asparagine 187, tyrosine 218, and 246–248 (SFS). 3 residues coordinate substrate: lysine 109, tyrosine 132, and asparagine 187. Lysine 249 bears the N6-(pyridoxal phosphate)lysine mark. Pyridoxal 5'-phosphate contacts are provided by arginine 257 and asparagine 292. Asparagine 292 and arginine 388 together coordinate substrate.

Belongs to the class-I pyridoxal-phosphate-dependent aminotransferase family. LL-diaminopimelate aminotransferase subfamily. As to quaternary structure, homodimer. Requires pyridoxal 5'-phosphate as cofactor.

It carries out the reaction (2S,6S)-2,6-diaminopimelate + 2-oxoglutarate = (S)-2,3,4,5-tetrahydrodipicolinate + L-glutamate + H2O + H(+). It participates in amino-acid biosynthesis; L-lysine biosynthesis via DAP pathway; LL-2,6-diaminopimelate from (S)-tetrahydrodipicolinate (aminotransferase route): step 1/1. Functionally, involved in the synthesis of meso-diaminopimelate (m-DAP or DL-DAP), required for both lysine and peptidoglycan biosynthesis. Catalyzes the direct conversion of tetrahydrodipicolinate to LL-diaminopimelate. The polypeptide is LL-diaminopimelate aminotransferase (Prochlorococcus marinus (strain AS9601)).